The following is a 314-amino-acid chain: MIAISADESPESSSPALRLRWLFLLLLLVLIYGSHAPLLSLCKTQAQIPFSASSCVLLIETSKLFISFASLLASGSVSTLRISISMTTASPYAVPAVLYAFNNHLVVFMQAYMDPSSFQVLSNLKIASTALLYTSCLGKRLHRRQWFAMGLLVSAGVSHSCFSYDLEGKRETAVYITSWGLLLVLVYCFVSGLAAVYTERVLKSQRLPLSMQNLFLYTFGVVVNLASHLSGGEQKGFFEGYSAVVWVIVAGQVANGLLMSVVMKHGTGITRLFVISSAMLVNAVLSWGILGVQLTGYFLFPVVLIGWAVYLYYT.

Residues 1 to 20 (MIAISADESPESSSPALRLR) are Cytoplasmic-facing. A helical transmembrane segment spans residues 21–41 (WLFLLLLLVLIYGSHAPLLSL). Over 42–54 (CKTQAQIPFSASS) the chain is Lumenal. The helical transmembrane segment at 55-75 (CVLLIETSKLFISFASLLASG) threads the bilayer. Residues 76–88 (SVSTLRISISMTT) are Cytoplasmic-facing. A helical transmembrane segment spans residues 89 to 109 (ASPYAVPAVLYAFNNHLVVFM). Over 110-145 (QAYMDPSSFQVLSNLKIASTALLYTSCLGKRLHRRQ) the chain is Lumenal. A helical transmembrane segment spans residues 146 to 166 (WFAMGLLVSAGVSHSCFSYDL). Residues 167–175 (EGKRETAVY) are Cytoplasmic-facing. The helical transmembrane segment at 176 to 196 (ITSWGLLLVLVYCFVSGLAAV) threads the bilayer. Residues 197 to 206 (YTERVLKSQR) lie on the Lumenal side of the membrane. A helical membrane pass occupies residues 207–227 (LPLSMQNLFLYTFGVVVNLAS). The Cytoplasmic portion of the chain corresponds to 228–242 (HLSGGEQKGFFEGYS). A helical membrane pass occupies residues 243–263 (AVVWVIVAGQVANGLLMSVVM). At 264-267 (KHGT) the chain is on the lumenal side. The helical transmembrane segment at 268–290 (GITRLFVISSAMLVNAVLSWGIL) threads the bilayer. Residues 291 to 314 (GVQLTGYFLFPVVLIGWAVYLYYT) are Cytoplasmic-facing.

Belongs to the nucleotide-sugar transporter family. SLC35A subfamily.

It is found in the golgi apparatus membrane. It carries out the reaction CDP-L-ribitol(in) + CDP(out) = CDP-L-ribitol(out) + CDP(in). Its function is as follows. Mediates the transport of CDP-ribitol. Does not exhibit CMP-sialic acid, UDP-galactose and UDP-N-acetylglucosamine transport activity. This is Probable UDP-sugar transporter protein SLC35A4 from Danio rerio (Zebrafish).